The chain runs to 485 residues: Glutamyl-tRNA(Gln) amidotransferase subunit A (485 aa).

Catalysis depends on charge relay system residues Lys-79 and Ser-154. Ser-178 (acyl-ester intermediate) is an active-site residue.

The protein belongs to the amidase family. GatA subfamily. Heterotrimer of A, B and C subunits.

The enzyme catalyses L-glutamyl-tRNA(Gln) + L-glutamine + ATP + H2O = L-glutaminyl-tRNA(Gln) + L-glutamate + ADP + phosphate + H(+). In terms of biological role, allows the formation of correctly charged Gln-tRNA(Gln) through the transamidation of misacylated Glu-tRNA(Gln) in organisms which lack glutaminyl-tRNA synthetase. The reaction takes place in the presence of glutamine and ATP through an activated gamma-phospho-Glu-tRNA(Gln). This is Glutamyl-tRNA(Gln) amidotransferase subunit A from Clostridium botulinum (strain Kyoto / Type A2).